The chain runs to 195 residues: O-methyltransferase (195 aa).

This sequence belongs to the methyltransferase superfamily.

It participates in secondary metabolite biosynthesis. Its function is as follows. O-methyltransferase; part of the gene cluster that mediates the biosynthesis of pyrophen and campyrone B, which represent a class of fungal amino acid-derived alpha-pyrone natural products. The first step of pyrophen biosynthesis is catalyzed by the PKS-NRPS hybrid synthetase ATPKS that uptakes and condensates L-phenylalanine and malonyl-CoA in order to produce desmethyldesacetylpyrophen. Although the A domain does not discriminate between 2 enantiomeric phenylalanines, the downstream KS domain must play a gate keeping role to stereoselectively accept the L-phenylalanyl-S-phosphopantetheine (Ppant)-T domain intermediate for chain elongation. The resulting amino acid derived diketide is off-loaded through lactonization to yield the alpha-pyrone intermediate desmethyldesacetylpyrophen. The cluster-specific O-methyltransferase (OMT) then methylates desmethyldesacetylpyrophen to desacetylpyrophen, which is further acetylated to pyrophen by an endogenous yet unidentified N-acetyltransferase. ATPKS has relaxed substrate specificity to activate and extend branched-chain amino acid L-leucine to produce small amounts of campyrone B. The sequence is that of O-methyltransferase from Aspergillus niger (strain ATCC 1015 / CBS 113.46 / FGSC A1144 / LSHB Ac4 / NCTC 3858a / NRRL 328 / USDA 3528.7).